The chain runs to 39 residues: Potassium channel toxin alpha-KTx 2.23 (39 aa).

3 cysteine pairs are disulfide-bonded: cysteine 7/cysteine 29, cysteine 13/cysteine 34, and cysteine 17/cysteine 36.

Expressed by the venom gland.

Its subcellular location is the secreted. Its function is as follows. Blocks human voltage-gated potassium (Kv) channels Kv1.1/KCNA1, Kv1.2/KCNA2 and Kv1.3/KCNA3. In Centruroides bonito (Scorpion), this protein is Potassium channel toxin alpha-KTx 2.23.